The following is a 120-amino-acid chain: Glycine cleavage system H protein (120 aa).

In terms of domain architecture, Lipoyl-binding spans 20–102 (DGTVGISDHA…YEGGWLFKLD (83 aa)). Residue lysine 61 is modified to N6-lipoyllysine.

This sequence belongs to the GcvH family. The glycine cleavage system is composed of four proteins: P, T, L and H. (R)-lipoate serves as cofactor.

Functionally, the glycine cleavage system catalyzes the degradation of glycine. The H protein shuttles the methylamine group of glycine from the P protein to the T protein. This Deinococcus radiodurans (strain ATCC 13939 / DSM 20539 / JCM 16871 / CCUG 27074 / LMG 4051 / NBRC 15346 / NCIMB 9279 / VKM B-1422 / R1) protein is Glycine cleavage system H protein.